Here is a 204-residue protein sequence, read N- to C-terminus: Guanylate kinase (204 aa).

Residues 3 to 181 enclose the Guanylate kinase-like domain; that stretch reads GTLIIITAPS…ALDDLVAVVR (179 aa). Residue 10-17 coordinates ATP; the sequence is APSGAGKT.

Belongs to the guanylate kinase family.

It is found in the cytoplasm. It catalyses the reaction GMP + ATP = GDP + ADP. Functionally, essential for recycling GMP and indirectly, cGMP. This is Guanylate kinase from Aromatoleum aromaticum (strain DSM 19018 / LMG 30748 / EbN1) (Azoarcus sp. (strain EbN1)).